Here is a 298-residue protein sequence, read N- to C-terminus: Probable deoxyhypusine synthase 2 (298 aa).

Lys259 serves as the catalytic Nucleophile.

This sequence belongs to the deoxyhypusine synthase family. NAD(+) is required as a cofactor.

The catalysed reaction is [eIF5A protein]-L-lysine + spermidine = [eIF5A protein]-deoxyhypusine + propane-1,3-diamine. The protein operates within protein modification; eIF5A hypusination. Catalyzes the NAD-dependent oxidative cleavage of spermidine and the subsequent transfer of the butylamine moiety of spermidine to the epsilon-amino group of a specific lysine residue of the eIF-5A precursor protein to form the intermediate deoxyhypusine residue. In Archaeoglobus fulgidus (strain ATCC 49558 / DSM 4304 / JCM 9628 / NBRC 100126 / VC-16), this protein is Probable deoxyhypusine synthase 2 (dys2).